Reading from the N-terminus, the 728-residue chain is Catalase-peroxidase (728 aa).

The segment at residues 91–218 (WHSAGTYRTA…LAAVQMGLIY (128 aa)) is a cross-link (tryptophyl-tyrosyl-methioninium (Trp-Tyr) (with M-244)). Catalysis depends on histidine 92, which acts as the Proton acceptor. The segment at residues 218–244 (YVNPEGPDGNPDPVAAARDIRDTFARM) is a cross-link (tryptophyl-tyrosyl-methioninium (Tyr-Met) (with W-91)). A heme b-binding site is contributed by histidine 259.

The protein belongs to the peroxidase family. Peroxidase/catalase subfamily. In terms of assembly, homodimer or homotetramer. It depends on heme b as a cofactor. In terms of processing, formation of the three residue Trp-Tyr-Met cross-link is important for the catalase, but not the peroxidase activity of the enzyme.

The enzyme catalyses H2O2 + AH2 = A + 2 H2O. It carries out the reaction 2 H2O2 = O2 + 2 H2O. In terms of biological role, bifunctional enzyme with both catalase and broad-spectrum peroxidase activity. In Burkholderia thailandensis (strain ATCC 700388 / DSM 13276 / CCUG 48851 / CIP 106301 / E264), this protein is Catalase-peroxidase.